The following is a 213-amino-acid chain: Probable 26S proteasome regulatory subunit p27 (213 aa).

Positions 1–82 (MDEFKQLDLK…IKKVLEKVFS (82 aa)) form a coiled coil. Residues 120–184 (SKILGRVKPF…TLDVLLIRGY (65 aa)) form the PDZ domain.

The protein localises to the cytoplasm. It localises to the nucleus. Acts as a chaperone during the assembly of the 26S proteasome, specifically of the base subcomplex of the 19S regulatory complex (RC). The chain is Probable 26S proteasome regulatory subunit p27 (nas2) from Schizosaccharomyces pombe (strain 972 / ATCC 24843) (Fission yeast).